The chain runs to 284 residues: 2-dehydro-3-deoxyphosphooctonate aldolase (284 aa).

It belongs to the KdsA family.

It localises to the cytoplasm. It catalyses the reaction D-arabinose 5-phosphate + phosphoenolpyruvate + H2O = 3-deoxy-alpha-D-manno-2-octulosonate-8-phosphate + phosphate. It participates in carbohydrate biosynthesis; 3-deoxy-D-manno-octulosonate biosynthesis; 3-deoxy-D-manno-octulosonate from D-ribulose 5-phosphate: step 2/3. It functions in the pathway bacterial outer membrane biogenesis; lipopolysaccharide biosynthesis. The protein is 2-dehydro-3-deoxyphosphooctonate aldolase of Vibrio vulnificus (strain CMCP6).